The following is a 394-amino-acid chain: LL-diaminopimelate aminotransferase (394 aa).

Substrate is bound by residues Y14 and G41. Pyridoxal 5'-phosphate contacts are provided by residues Y71, A104–K105, Y128, N174, Y205, and S233–S235. Substrate is bound by residues K105, Y128, and N174. K236 is modified (N6-(pyridoxal phosphate)lysine). 2 residues coordinate pyridoxal 5'-phosphate: R244 and N275. Substrate contacts are provided by N275 and R369.

The protein belongs to the class-I pyridoxal-phosphate-dependent aminotransferase family. LL-diaminopimelate aminotransferase subfamily. In terms of assembly, homodimer. The cofactor is pyridoxal 5'-phosphate.

It catalyses the reaction (2S,6S)-2,6-diaminopimelate + 2-oxoglutarate = (S)-2,3,4,5-tetrahydrodipicolinate + L-glutamate + H2O + H(+). It functions in the pathway amino-acid biosynthesis; L-lysine biosynthesis via DAP pathway; LL-2,6-diaminopimelate from (S)-tetrahydrodipicolinate (aminotransferase route): step 1/1. In terms of biological role, involved in the synthesis of meso-diaminopimelate (m-DAP or DL-DAP), required for both lysine and peptidoglycan biosynthesis. Catalyzes the direct conversion of tetrahydrodipicolinate to LL-diaminopimelate. The sequence is that of LL-diaminopimelate aminotransferase from Chlamydia trachomatis serovar L2b (strain UCH-1/proctitis).